The primary structure comprises 785 residues: Rho-GTPase-activating protein RGD3 (785 aa).

The residue at position 2 (S2) is an N-acetylserine. The F-BAR domain occupies 31–463 (ISLRNTYWTK…PQETANADVR (433 aa)). Positions 313–340 (SNGNAGNRKKKSYGELTHSDNEHEEKSN) are disordered. Over residues 329-339 (THSDNEHEEKS) the composition is skewed to basic and acidic residues. Positions 520 to 702 (IILRQIEKEP…TFFINERTVE (183 aa)) constitute a Rho-GAP domain. Positions 732 to 785 (TAPIHSTPKPPPNDKDGHFIPRPFKTSSTPTTPERPKRKSGLFLPINVNDVPST) are disordered. Phosphoserine is present on S759. Residues T760, T762, and T763 each carry the phosphothreonine modification.

Post-translationally, phosphorylation at the C-terminus negatively regulates the activity and the polarized localization.

It localises to the cytoplasmic vesicle membrane. Its subcellular location is the cell membrane. It is found in the bud tip. The protein localises to the bud neck. GTPase activating protein (GAP) for RHO3 and CDC42 that binds membranes through phosphatidylinositol 4,5-bisphosphate. Plays a key role in cell polarity. Modulates the RHO3 distribution at the plasma membrane and its polarity during growth. The sequence is that of Rho-GTPase-activating protein RGD3 from Saccharomyces cerevisiae (strain ATCC 204508 / S288c) (Baker's yeast).